An 80-amino-acid chain; its full sequence is Myrmicitoxin(1)-Pr1a (80 aa).

The N-terminal stretch at 1 to 23 (MEIPKLLYIAVIAIGLSGSLTWA) is a signal peptide. Residues 24 to 57 (TPLANPLAEAEAEAKATAEATAEALAEALAEPEP) constitute a propeptide that is removed on maturation. At phenylalanine 79 the chain carries Phenylalanine amide.

The protein belongs to the formicidae venom clade 1 family. In terms of tissue distribution, expressed by the venom gland.

It localises to the secreted. In terms of biological role, vertebrate-selective toxin that causes pain by targeting voltage-gated sodium channels. The sequence is that of Myrmicitoxin(1)-Pr1a from Pogonomyrmex rugosus (Desert harvester ant).